The chain runs to 472 residues: Aspartyl/glutamyl-tRNA(Asn/Gln) amidotransferase subunit B (472 aa).

It belongs to the GatB/GatE family. GatB subfamily. As to quaternary structure, heterotrimer of A, B and C subunits.

The catalysed reaction is L-glutamyl-tRNA(Gln) + L-glutamine + ATP + H2O = L-glutaminyl-tRNA(Gln) + L-glutamate + ADP + phosphate + H(+). It catalyses the reaction L-aspartyl-tRNA(Asn) + L-glutamine + ATP + H2O = L-asparaginyl-tRNA(Asn) + L-glutamate + ADP + phosphate + 2 H(+). In terms of biological role, allows the formation of correctly charged Asn-tRNA(Asn) or Gln-tRNA(Gln) through the transamidation of misacylated Asp-tRNA(Asn) or Glu-tRNA(Gln) in organisms which lack either or both of asparaginyl-tRNA or glutaminyl-tRNA synthetases. The reaction takes place in the presence of glutamine and ATP through an activated phospho-Asp-tRNA(Asn) or phospho-Glu-tRNA(Gln). This Campylobacter jejuni subsp. doylei (strain ATCC BAA-1458 / RM4099 / 269.97) protein is Aspartyl/glutamyl-tRNA(Asn/Gln) amidotransferase subunit B.